The primary structure comprises 668 residues: Hemocyanin subunit D (668 aa).

A signal peptide spans 1-22 (MDTRVLRLTLALVALSGVLADS). Histidine 206, histidine 210, and histidine 236 together coordinate Cu cation. Asparagine 322 is a glycosylation site (N-linked (GlcNAc...) asparagine). Cu cation-binding residues include histidine 357, histidine 361, and histidine 397. Cysteine 567 and cysteine 614 form a disulfide bridge.

This sequence belongs to the tyrosinase family. Hemocyanin subfamily. 36-chain polymer consisting of 6 hexamers, each of which includes 4 different chains, A, B, C and D. Hemolymph.

The protein localises to the secreted. Its subcellular location is the extracellular space. Hemocyanins are copper-containing oxygen carriers occurring freely dissolved in the hemolymph of many mollusks and arthropods. The sequence is that of Hemocyanin subunit D (HCD) from Scutigera coleoptrata (House centipede).